The chain runs to 28 residues: IYVRPTKDELLYCGEFRELGQPDKKCRC.

This sequence belongs to the ornatin family.

It is found in the secreted. In terms of biological role, potent inhibitor of fibrinogen interaction with platelet receptors expressed on glycoprotein IIb-IIIa complex. May prevent blood from clotting during either feeding and/or storage of ingested blood. In Placobdella ornata (Turtle leech), this protein is Ornatin-D.